The following is a 301-amino-acid chain: 2-dehydropantoate 2-reductase (301 aa).

NADP(+)-binding positions include 11–16 (GAGAMG), Asn107, and Ala133. Asn107 provides a ligand contact to substrate. Lys187 acts as the Proton donor in catalysis. The substrate site is built by Asn191, Asn195, Asn205, and Ser251. Residue Glu263 participates in NADP(+) binding.

It belongs to the ketopantoate reductase family.

Its subcellular location is the cytoplasm. The catalysed reaction is (R)-pantoate + NADP(+) = 2-dehydropantoate + NADPH + H(+). Its pathway is cofactor biosynthesis; (R)-pantothenate biosynthesis; (R)-pantoate from 3-methyl-2-oxobutanoate: step 2/2. Catalyzes the NADPH-dependent reduction of ketopantoate into pantoic acid. The sequence is that of 2-dehydropantoate 2-reductase from Listeria innocua serovar 6a (strain ATCC BAA-680 / CLIP 11262).